A 241-amino-acid polypeptide reads, in one-letter code: Triosephosphate isomerase (241 aa).

Residue 9-11 participates in substrate binding; the sequence is NWK. His96 acts as the Electrophile in catalysis. Catalysis depends on Glu165, which acts as the Proton acceptor. Residues Gly171, Ser204, and 225–226 contribute to the substrate site; that span reads GG.

This sequence belongs to the triosephosphate isomerase family. As to quaternary structure, homodimer.

The protein resides in the cytoplasm. It carries out the reaction D-glyceraldehyde 3-phosphate = dihydroxyacetone phosphate. It participates in carbohydrate biosynthesis; gluconeogenesis. Its pathway is carbohydrate degradation; glycolysis; D-glyceraldehyde 3-phosphate from glycerone phosphate: step 1/1. Involved in the gluconeogenesis. Catalyzes stereospecifically the conversion of dihydroxyacetone phosphate (DHAP) to D-glyceraldehyde-3-phosphate (G3P). In Picosynechococcus sp. (strain ATCC 27264 / PCC 7002 / PR-6) (Agmenellum quadruplicatum), this protein is Triosephosphate isomerase.